A 214-amino-acid polypeptide reads, in one-letter code: Large ribosomal subunit protein uL16 (214 aa).

R32 is modified (citrulline). K175 is covalently cross-linked (Glycyl lysine isopeptide (Lys-Gly) (interchain with G-Cter in SUMO2)). K188 is covalently cross-linked (Glycyl lysine isopeptide (Lys-Gly) (interchain with G-Cter in ubiquitin)).

It belongs to the universal ribosomal protein uL16 family. As to quaternary structure, component of the large ribosomal subunit. Mature ribosomes consist of a small (40S) and a large (60S) subunit. The 40S subunit contains about 33 different proteins and 1 molecule of RNA (18S). The 60S subunit contains about 49 different proteins and 3 molecules of RNA (28S, 5.8S and 5S). Citrullinated by PADI4. Post-translationally, ufmylated by UFL1.

It is found in the cytoplasm. Component of the large ribosomal subunit. Plays a role in the formation of actively translating ribosomes. May play a role in the embryonic brain development. This chain is Large ribosomal subunit protein uL16, found in Pongo abelii (Sumatran orangutan).